A 472-amino-acid chain; its full sequence is Uronate isomerase (472 aa).

Belongs to the metallo-dependent hydrolases superfamily. Uronate isomerase family.

The catalysed reaction is D-glucuronate = D-fructuronate. It carries out the reaction aldehydo-D-galacturonate = keto-D-tagaturonate. The protein operates within carbohydrate metabolism; pentose and glucuronate interconversion. This chain is Uronate isomerase, found in Nostoc punctiforme (strain ATCC 29133 / PCC 73102).